The following is a 196-amino-acid chain: Imidazole glycerol phosphate synthase subunit HisH (196 aa).

The 195-residue stretch at 2–196 (KVAVIKYNAG…ERIIKNFLEL (195 aa)) folds into the Glutamine amidotransferase type-1 domain. The active-site Nucleophile is cysteine 77. Catalysis depends on residues histidine 178 and glutamate 180.

Heterodimer of HisH and HisF.

It localises to the cytoplasm. The catalysed reaction is 5-[(5-phospho-1-deoxy-D-ribulos-1-ylimino)methylamino]-1-(5-phospho-beta-D-ribosyl)imidazole-4-carboxamide + L-glutamine = D-erythro-1-(imidazol-4-yl)glycerol 3-phosphate + 5-amino-1-(5-phospho-beta-D-ribosyl)imidazole-4-carboxamide + L-glutamate + H(+). It catalyses the reaction L-glutamine + H2O = L-glutamate + NH4(+). It functions in the pathway amino-acid biosynthesis; L-histidine biosynthesis; L-histidine from 5-phospho-alpha-D-ribose 1-diphosphate: step 5/9. In terms of biological role, IGPS catalyzes the conversion of PRFAR and glutamine to IGP, AICAR and glutamate. The HisH subunit catalyzes the hydrolysis of glutamine to glutamate and ammonia as part of the synthesis of IGP and AICAR. The resulting ammonia molecule is channeled to the active site of HisF. The polypeptide is Imidazole glycerol phosphate synthase subunit HisH (Bacteroides fragilis (strain YCH46)).